Consider the following 238-residue polypeptide: Chorionic somatomammotropin hormone 2 (238 aa).

The signal sequence occupies residues 1 to 36 (MAPAPSFRGHQWTYNPVRGSCLLLLLVVSNLLLCQG). H66 provides a ligand contact to Zn(2+). N70, N92, N146, and N160 each carry an N-linked (GlcNAc...) asparagine glycan. A disulfide bridge links C97 with C215. Residue D224 coordinates Zn(2+). An intrachain disulfide couples C232 to C238.

It belongs to the somatotropin/prolactin family.

It is found in the secreted. This Bos taurus (Bovine) protein is Chorionic somatomammotropin hormone 2 (CSH2).